The primary structure comprises 346 residues: Protein RecA (346 aa).

65–72 (GPESSGKT) is a binding site for ATP.

This sequence belongs to the RecA family.

The protein localises to the cytoplasm. In terms of biological role, can catalyze the hydrolysis of ATP in the presence of single-stranded DNA, the ATP-dependent uptake of single-stranded DNA by duplex DNA, and the ATP-dependent hybridization of homologous single-stranded DNAs. It interacts with LexA causing its activation and leading to its autocatalytic cleavage. The polypeptide is Protein RecA (Enterococcus hirae (strain ATCC 9790 / DSM 20160 / JCM 8729 / LMG 6399 / NBRC 3181 / NCIMB 6459 / NCDO 1258 / NCTC 12367 / WDCM 00089 / R)).